A 907-amino-acid chain; its full sequence is Valine--tRNA ligase (907 aa).

The 'HIGH' region motif lies at 45–55; that stretch reads PNVTGSLHMGH. Residues 554–558 carry the 'KMSKS' region motif; it reads KMSKS. Lys-557 contributes to the ATP binding site. Residues 838-870 are a coiled coil; that stretch reads GQLIDLEAERARLVKNVSKIEQDIEKISVKLNN.

Belongs to the class-I aminoacyl-tRNA synthetase family. ValS type 1 subfamily. As to quaternary structure, monomer.

Its subcellular location is the cytoplasm. The catalysed reaction is tRNA(Val) + L-valine + ATP = L-valyl-tRNA(Val) + AMP + diphosphate. Catalyzes the attachment of valine to tRNA(Val). As ValRS can inadvertently accommodate and process structurally similar amino acids such as threonine, to avoid such errors, it has a 'posttransfer' editing activity that hydrolyzes mischarged Thr-tRNA(Val) in a tRNA-dependent manner. The chain is Valine--tRNA ligase from Bartonella quintana (strain Toulouse) (Rochalimaea quintana).